Consider the following 366-residue polypeptide: 5-formaminoimidazole-4-carboxamide-1-(beta)-D-ribofuranosyl 5'-monophosphate synthetase (366 aa).

The 5-amino-1-(5-phospho-beta-D-ribosyl)imidazole-4-carboxamide site is built by H27 and S96. The ATP-grasp domain maps to 131–357 (RKWLEDAGVP…IAREIKEAVK (227 aa)). Residues 154 to 208 (PVIV…VRFY) and E239 each bind ATP. N263 lines the 5-amino-1-(5-phospho-beta-D-ribosyl)imidazole-4-carboxamide pocket. Residues E302 and E315 each coordinate Mg(2+).

This sequence belongs to the phosphohexose mutase family. The cofactor is Mg(2+). Requires Mn(2+) as cofactor.

The enzyme catalyses 5-amino-1-(5-phospho-beta-D-ribosyl)imidazole-4-carboxamide + formate + ATP = 5-formamido-1-(5-phospho-D-ribosyl)imidazole-4-carboxamide + ADP + phosphate. It participates in purine metabolism; IMP biosynthesis via de novo pathway; 5-formamido-1-(5-phospho-D-ribosyl)imidazole-4-carboxamide from 5-amino-1-(5-phospho-D-ribosyl)imidazole-4-carboxamide (formate route): step 1/1. Functionally, catalyzes the ATP- and formate-dependent formylation of 5-aminoimidazole-4-carboxamide-1-beta-d-ribofuranosyl 5'-monophosphate (AICAR) to 5-formaminoimidazole-4-carboxamide-1-beta-d-ribofuranosyl 5'-monophosphate (FAICAR) in the absence of folates. The chain is 5-formaminoimidazole-4-carboxamide-1-(beta)-D-ribofuranosyl 5'-monophosphate synthetase from Korarchaeum cryptofilum (strain OPF8).